The primary structure comprises 363 residues: Cyanuric acid amidohydrolase (363 aa).

The segment at M1 to D104 is RU A. Substrate-binding positions include R52 and S83 to G84. Positions R112–E249 are RU B. K162 is a catalytic residue. Residues R194 and S232–A233 each bind substrate. Residue S232 is the Nucleophile of the active site. An RU C region spans residues L255–A363. A Mg(2+)-binding site is contributed by E297. Substrate-binding positions include R324 and S343 to G344. Mg(2+) is bound by residues A346, Q349, G350, P351, and G354.

Belongs to the cyclic amide hydrolase (CyAH) family. As to quaternary structure, homotetramer.

The enzyme catalyses cyanurate + H2O = 1-carboxybiuret + H(+). Its pathway is xenobiotic degradation; atrazine degradation; biuret from cyanurate: step 1/1. With respect to regulation, inhibited by barbituric acid. Responsible for the hydrolysis of cyanuric acid, an intermediate formed during catabolism of s-triazine based compounds in herbicides such as atrazine and polymers such as melamine. Catalyzes the hydrolytic opening of the s-triazine ring of cyanuric acid (2,4,6-trihydroxy-s-triazine) to yield carbon dioxide and carboxybiuret, which spontaneously decarboxylates to biuret. The protein is Cyanuric acid amidohydrolase (atzD) of Pseudomonas sp. (strain ADP).